Reading from the N-terminus, the 219-residue chain is Protoglabretal synthase ISM2 (219 aa).

The next 5 helical transmembrane spans lie at V26 to G46, L59 to F79, A112 to V132, I144 to A164, and Y178 to I198. An EXPERA domain is found at T55–I197.

Belongs to the EBP family.

It is found in the membrane. It catalyses the reaction 7,8-epoxymelianol = protoglabretal. It functions in the pathway secondary metabolite biosynthesis; terpenoid biosynthesis. In terms of biological role, isomerase involved in the biosynthesis of glabretanes triterpene natural products such as glabretal, a component with in vitro antiproliferative properties on lymphocytes. Catalyzes the conversion of 7,8-epoxymelianol to protoglabretal via skeletal rearrangements. The sequence is that of Protoglabretal synthase ISM2 from Ailanthus altissima (Tree-of-heaven).